Here is a 561-residue protein sequence, read N- to C-terminus: Transmembrane protein 209 (561 aa).

The residue at position 11 (serine 11) is a Phosphoserine. The helical transmembrane segment at 28 to 48 (VVLAWGLLNVSMAGMIYTEMT) threads the bilayer. N-linked (GlcNAc...) asparagine glycosylation is present at asparagine 57. A helical membrane pass occupies residues 60–80 (YWPLWYIELALASLFSLNALF). Residue serine 98 is modified to Phosphoserine. 2 disordered regions span residues 120 to 156 (LAATQISPSPPSPSIQGQSVLSYSPSRSPSTSPKFAT) and 200 to 232 (SSPYPTTVGPVESSGLRARYRSPPTVYNSPTDK). Low complexity predominate over residues 138-152 (SVLSYSPSRSPSTSP). Phosphoserine occurs at positions 201 and 248. A disordered region spans residues 250 to 270 (EEKQHRVKLGSPDSTSPSTSP). The segment covering 260–270 (SPDSTSPSTSP) has biased composition (low complexity). Residue asparagine 274 is glycosylated (N-linked (GlcNAc...) asparagine). At serine 278 the chain carries Phosphoserine.

In terms of assembly, interacts with NUP205.

It localises to the membrane. The protein localises to the nucleus envelope. Its subcellular location is the golgi apparatus. The protein resides in the cytoplasm. Functionally, nuclear envelope protein which in association with NUP205, may be involved in nuclear transport of various nuclear proteins in addition to MYC. The polypeptide is Transmembrane protein 209 (Tmem209) (Mus musculus (Mouse)).